Here is a 675-residue protein sequence, read N- to C-terminus: MVRRAPGASLALLLWVTAVSGSPAGPGAATARRQDEAFSTARCTSRCLSLQITRISAFFKHFQNNGSLAWCQNHKQCSKCLEPCKESWDLKKNHCQSFCEPLFPKKNYECLTSCEFLKYILSVKQGDCPAPEKASGFAAACVESCEADSECSGVKKCCSNGCGHTCQVPKNLYKGVPLKPRKELKFIELQSGDLEVKWSSKFNISIEPVIYVVQRRWNQGIHPSEDDATNWQTVAQTTDERVQLSDIRASRWYQFRVAAVNVHGTRGFTAPSKHFRSSKDPSAPPAPSNIRIANISANNDGTVNVMITWDLPEEPDIPVHHYKVFWSWTYSKYVIPAKKKRRKITDGPQNYVVLEGLQPNSNYNVELQAVTRWGQIRLKSAKVSLHFSTAQDNRNNNEQTSAGKPPKGLVDPYPTFQRRKPTRFLKIGTPFYQDNQLQVKVYWKKTDINMNQFQVHSLLESCVHNDTKGLEKVTELTYENYMILKDLSFSCKYKVTVLPAKSKSRFKAESIFFVTPSCSAFKEKTHKHINCAAEEVPVLPKVLAKPENLSASFIVQEGNITGHFSWKISKAVLHQPMTGFQVTWAEVTTESRQNSLPNSIISQSQILPADHYVLTVPNLRPSMLYRLEVQVLTTGGEGPATIKLFRTPDLPPFLPHRPHLKQHHPHHYKPPPEKY.

The signal sequence occupies residues 1–21 (MVRRAPGASLALLLWVTAVSG). 5 disulfide bridges follow: C43–C77, C47–C71, C80–C99, C84–C95, and C110–C114. An N-linked (GlcNAc...) asparagine glycan is attached at N65. A WAP domain is found at 121–170 (LSVKQGDCPAPEKASGFAAACVESCEADSECSGVKKCCSNGCGHTCQVPK). 4 Fibronectin type-III domains span residues 180 to 281 (PRKE…SKDP), 286 to 392 (APSN…TAQD), 418 to 515 (RRKP…FFVT), and 545 to 652 (KPEN…DLPP). 2 N-linked (GlcNAc...) asparagine glycosylation sites follow: N203 and N294. A compositionally biased stretch (polar residues) spans 388 to 402 (STAQDNRNNNEQTSA). The disordered stretch occupies residues 388–413 (STAQDNRNNNEQTSAGKPPKGLVDPY). N-linked (GlcNAc...) asparagine glycosylation is found at N465, N548, and N559. The segment at 654-675 (LPHRPHLKQHHPHHYKPPPEKY) is disordered. The segment covering 656-669 (HRPHLKQHHPHHYK) has biased composition (basic residues).

In terms of tissue distribution, mainly expressed in neurons of the central nervous system during the second half of embryonic life. Expressed in mitral neurons of the olfactory bulbs, striatal neurons, Purkinje cells of the cerebellum, retinal neurons and neurons of the brainstem and spinal cord.

The protein resides in the cell surface. Its function is as follows. May be an adhesion-like molecule with anti-protease activity. The chain is Anosmin-1 from Gallus gallus (Chicken).